Consider the following 1009-residue polypeptide: MSDENENGRPGGRTPMTLKPRQGSVSAGVVKQSFSHGRTKTVVVETKRTRTHAPASGNLAAPSSAERRHGEAPAPRPAPPQGGGGGSAGGLSQEELRARQRVVDAAREAQARQVAEQAAAEARARAAQEAAQREAAAKAAAERAAAAPPPVAQAPAAPAPAAPVTPPPAAPQAPRPVAQAPVAPSAPRQDAPRQDTRAAAPGQTRTYEPSRDRRDDRPSTTTYRPAPQGDRPFNQRAPRPDANANFGQRAPRPEGDRPRGPRPDGDRPQGDRGGYRGDRPQGDRPQGDRPQQTVRYSALAPRPAPGARGPGGPPRGPRPGVPAAAPATPEIQRATRSAPRPGGGAMDRRPDEDDDRRKNAAPNKAVSRVKGAPQRREGRLTIQAVAGDGDSADRMRSLASVRRAREREKEKRRGGAVEQARVAREVVIPDVITVQELSNRMAVRGVDIIKFLMRQGVMLKINDVIDNDTAELVATEFGHTVKRVSEADVEEGFIGADDHDEHMDLRPPVVTIMGHVDHGKTSLLDALRSTDVAAGEAGGITQHIGAYQVRLKDGQRVTFLDTPGHAAFSSMRARGANITDIVVLVVAGDDGVMPQTIEAIKHAKAAEVPIIVAVNKMDKPGSDPTRVVNELLQHEIVVESLGGDTQLIEVSAKARTGLDNLLEAILLQAEVLDLKANPDRSADGVVIEAKLDKGRGAVSTVLVNRGTLKRGDIVVAGSQWGKVRALLNERNEQLQEAGPATPVEILGLDGVPSPGDAFAVVENEARARELTEYRIRLKREKSMAPVGAGASMADMMAKLQDKKLKELPLVIKADVQGSAEAIIGSLDKMATDEVRARIILSGAGAISESDVMLAKGAGAPVIGFNVRASAQARALAEREGVEIRYYAIIYDLLDDIKGVLSGMLAPIQRETFLGNAEVLQAFDISKIGKVAGCKVTEGVVRKGAKVRIIRQDIVVLELGTLQTLKRFKDEVNEVPVGQECGMMFAGFQDIKVGDTIECFTVEEIKRQLD.

The disordered stretch occupies residues Met1–Gly415. Residues Glu94–Gln110 are compositionally biased toward basic and acidic residues. Positions Ala111–Glu121 are enriched in low complexity. The segment covering Ala122–Ala136 has biased composition (basic and acidic residues). Residues Ala137–Ala146 are compositionally biased toward low complexity. Positions Ala147–Pro174 are enriched in pro residues. A compositionally biased stretch (low complexity) spans Arg175–Gln189. 2 stretches are compositionally biased toward basic and acidic residues: residues Glu208 to Pro218 and Pro251 to Gly287. Residues Gly311 to Gly320 show a composition bias toward pro residues. Composition is skewed to basic and acidic residues over residues Met346 to Lys358 and Arg403 to Gly415. A tr-type G domain is found at Leu505–Lys675. The tract at residues Gly514–Thr521 is G1. Residue Gly514 to Thr521 coordinates GTP. The tract at residues Gly539–His543 is G2. A G3 region spans residues Asp561 to Gly564. GTP contacts are provided by residues Asp561 to His565 and Asn615 to Asp618. Residues Asn615 to Asp618 form a G4 region. The segment at Ser651–Lys653 is G5.

This sequence belongs to the TRAFAC class translation factor GTPase superfamily. Classic translation factor GTPase family. IF-2 subfamily.

Its subcellular location is the cytoplasm. One of the essential components for the initiation of protein synthesis. Protects formylmethionyl-tRNA from spontaneous hydrolysis and promotes its binding to the 30S ribosomal subunits. Also involved in the hydrolysis of GTP during the formation of the 70S ribosomal complex. The protein is Translation initiation factor IF-2 of Caulobacter vibrioides (strain ATCC 19089 / CIP 103742 / CB 15) (Caulobacter crescentus).